The chain runs to 453 residues: Omega-3 fatty acid desaturase, chloroplastic (453 aa).

Positions 171 to 175 (HDCGH) match the Histidine box-1 motif. The Histidine box-2 motif lies at 207–211 (HRTHH). Residues 374-378 (HVIHH) carry the Histidine box-3 motif.

It belongs to the fatty acid desaturase type 1 family.

It localises to the plastid. The protein localises to the chloroplast membrane. The protein operates within lipid metabolism; polyunsaturated fatty acid biosynthesis. In terms of biological role, chloroplast omega-3 fatty acid desaturase introduces the third double bond in the biosynthesis of 16:3 and 18:3 fatty acids, important constituents of plant membranes. It is thought to use ferredoxin as an electron donor and to act on fatty acids esterified to galactolipids, sulfolipids and phosphatidylglycerol. The polypeptide is Omega-3 fatty acid desaturase, chloroplastic (FAD7) (Glycine max (Soybean)).